A 569-amino-acid polypeptide reads, in one-letter code: Urease subunit beta (569 aa).

In terms of domain architecture, Urease spans 131 to 569 (GGIDTHIHFI…VSLAQLFSIF (439 aa)). Ni(2+) is bound by residues histidine 136, histidine 138, and lysine 219. An N6-carboxylysine modification is found at lysine 219. Histidine 221 provides a ligand contact to substrate. Ni(2+)-binding residues include histidine 248 and histidine 274. Catalysis depends on histidine 322, which acts as the Proton donor. Aspartate 362 contributes to the Ni(2+) binding site.

Belongs to the metallo-dependent hydrolases superfamily. Urease alpha subunit family. Heterohexamer of 3 UreA (alpha) and 3 UreB (beta) subunits. Requires Ni cation as cofactor. Carboxylation allows a single lysine to coordinate two nickel ions.

It is found in the cytoplasm. It catalyses the reaction urea + 2 H2O + H(+) = hydrogencarbonate + 2 NH4(+). It functions in the pathway nitrogen metabolism; urea degradation; CO(2) and NH(3) from urea (urease route): step 1/1. In Helicobacter pylori (strain P12), this protein is Urease subunit beta.